We begin with the raw amino-acid sequence, 489 residues long: DBIRD complex subunit ZNF326 (489 aa).

4 disordered regions span residues 1 to 28 (MDRE…EMGD), 62 to 100 (EQGH…PSFT), 133 to 181 (VGSR…RPGL), and 205 to 263 (PPFK…KNSE). A compositionally biased stretch (polar residues) spans 7–22 (SYNQRSMDSYGNQSYS). A compositionally biased stretch (basic and acidic residues) spans 62–76 (EQGHFGDSYDGRYEN). The segment covering 91 to 100 (GGSSWDPSFT) has biased composition (polar residues). A Bipartite nuclear localization signal motif is present at residues 200-221 (KRKMAPPFKPVGVFGKKQKLSK). 2 consecutive C2H2 AKAP95-type zinc fingers follow at residues 273-295 (CSFC…STTH) and 365-388 (CSAC…SADH). The interval 431-489 (ETQPEEQQQEQEEEEEEEEQQEQAAVPEQDLSEEQPAAIAAEPEGEDFTCDPLTTTDEV) is disordered. Residues 433–451 (QPEEQQQEQEEEEEEEEQQ) are compositionally biased toward acidic residues.

Belongs to the AKAP95 family. As to quaternary structure, component of the DBIRD complex.

It is found in the nucleus. Its function is as follows. Core component of the DBIRD complex, a multiprotein complex that acts at the interface between core mRNP particles and RNA polymerase II (RNAPII) and integrates transcript elongation with the regulation of alternative splicing. This chain is DBIRD complex subunit ZNF326 (znf326), found in Xenopus tropicalis (Western clawed frog).